Consider the following 637-residue polypeptide: 3D-(3,5/4)-trihydroxycyclohexane-1,2-dione hydrolase (637 aa).

Position 66 (Glu66) interacts with thiamine diphosphate. The interval 442 to 522 (SLPGDLQRLW…INVLLFDNSG (81 aa)) is thiamine pyrophosphate binding. Residues Asp493 and Asn520 each coordinate Mg(2+).

This sequence belongs to the TPP enzyme family. It depends on Mg(2+) as a cofactor. Thiamine diphosphate is required as a cofactor.

The catalysed reaction is 3D-3,5/4-trihydroxycyclohexane-1,2-dione + H2O = 5-deoxy-D-glucuronate + H(+). The protein operates within polyol metabolism; myo-inositol degradation into acetyl-CoA; acetyl-CoA from myo-inositol: step 3/7. Involved in the cleavage of the C1-C2 bond of 3D-(3,5/4)-trihydroxycyclohexane-1,2-dione (THcHDO) to yield 5-deoxy-glucuronate (5DG). The chain is 3D-(3,5/4)-trihydroxycyclohexane-1,2-dione hydrolase from Bacillus licheniformis (strain ATCC 14580 / DSM 13 / JCM 2505 / CCUG 7422 / NBRC 12200 / NCIMB 9375 / NCTC 10341 / NRRL NRS-1264 / Gibson 46).